Reading from the N-terminus, the 56-residue chain is MAVQQNKKSRSKRGMRRSHDALSTAQLSVDATSGEVHMRHNVTADGFYRGKKVINK.

Positions 1–36 (MAVQQNKKSRSKRGMRRSHDALSTAQLSVDATSGEV) are disordered. Residues 7–16 (KKSRSKRGMR) show a composition bias toward basic residues. A compositionally biased stretch (polar residues) spans 21-31 (ALSTAQLSVDA).

The protein belongs to the bacterial ribosomal protein bL32 family.

This Shewanella oneidensis (strain ATCC 700550 / JCM 31522 / CIP 106686 / LMG 19005 / NCIMB 14063 / MR-1) protein is Large ribosomal subunit protein bL32.